The sequence spans 1538 residues: Dicer-like protein 1 (1538 aa).

The segment at Asp39–Gln72 is disordered. A compositionally biased stretch (basic and acidic residues) spans Ala45–Asp55. Residues Leu134–Leu315 enclose the Helicase ATP-binding domain. Position 147-154 (Leu147–Thr154) interacts with ATP. Residues Asp260 to His263 carry the DEAH box motif. The 160-residue stretch at Glu460–His619 folds into the Helicase C-terminal domain. One can recognise a Dicer dsRNA-binding fold domain in the interval Ala652–Ala742. A PAZ domain is found at Asp892–Ala1020. 2 consecutive RNase III domains span residues Ile1044–Gly1203 and Ala1254–Lys1406. Mg(2+) is bound by residues Glu1295, Asp1392, and Glu1395. The DRBM domain occupies Thr1440–Gly1508. Residues Cys1452, His1479, Cys1520, and Cys1522 each contribute to the Zn(2+) site.

The protein belongs to the helicase family. Dicer subfamily. The cofactor is Mg(2+). Mn(2+) is required as a cofactor.

Dicer-like endonuclease involved in cleaving double-stranded RNA in the RNA interference (RNAi) pathway. Produces 21 to 25 bp dsRNAs (siRNAs) which target the selective destruction of homologous RNAs leading to sequence-specific suppression of gene expression, called post-transcriptional gene silencing (PTGS). Part of a broad host defense response against viral infection and transposons. This chain is Dicer-like protein 1 (dcl1), found in Neosartorya fischeri (strain ATCC 1020 / DSM 3700 / CBS 544.65 / FGSC A1164 / JCM 1740 / NRRL 181 / WB 181) (Aspergillus fischerianus).